The chain runs to 309 residues: Isethionate sulfite-lyase activating enzyme (309 aa).

Residues 22–309 (HDGPGIRTVV…VVAAEHATDG (288 aa)) form the Radical SAM core domain. [4Fe-4S] cluster is bound by residues Cys36, Cys40, Cys43, Cys62, Cys68, Cys71, Cys75, Cys95, Cys98, Cys102, and Cys106. 42 to 44 (WCS) is an S-adenosyl-L-methionine binding site. 4Fe-4S ferredoxin-type domains follow at residues 53-85 (IELA…RADD) and 86-117 (DTIS…YGTT). Residues Gly146, 195–197 (DIK), and His268 contribute to the S-adenosyl-L-methionine site.

The protein belongs to the organic radical-activating enzymes family. In terms of assembly, monomer. [4Fe-4S] cluster is required as a cofactor.

The enzyme catalyses glycyl-[protein] + reduced [flavodoxin] + S-adenosyl-L-methionine = glycin-2-yl radical-[protein] + semiquinone [flavodoxin] + 5'-deoxyadenosine + L-methionine + H(+). It functions in the pathway organosulfur degradation; alkanesulfonate degradation. Its function is as follows. Involved in an anaerobic respiration pathway that converts the sulfonate isethionate (2-hydroxyethanesulfonate) to ammonia, acetate and sulfide. Catalyzes activation of the isethionate sulfite-lyase IslA under anaerobic conditions by generation of an organic free radical on a glycine residue, via a homolytic cleavage of S-adenosyl-L-methionine (SAM). This chain is Isethionate sulfite-lyase activating enzyme, found in Oleidesulfovibrio alaskensis (strain ATCC BAA-1058 / DSM 17464 / G20) (Desulfovibrio alaskensis).